The chain runs to 223 residues: Probable iron-sulfur cluster repair protein HI_1677 (223 aa).

It belongs to the RIC family.

The protein resides in the cytoplasm. Di-iron-containing protein involved in the repair of iron-sulfur clusters. In Haemophilus influenzae (strain ATCC 51907 / DSM 11121 / KW20 / Rd), this protein is Probable iron-sulfur cluster repair protein HI_1677.